The chain runs to 307 residues: UDP-3-O-acyl-N-acetylglucosamine deacetylase (307 aa).

Zn(2+)-binding residues include histidine 78, histidine 241, and aspartate 245. Histidine 268 (proton donor) is an active-site residue.

This sequence belongs to the LpxC family. Zn(2+) is required as a cofactor.

It catalyses the reaction a UDP-3-O-[(3R)-3-hydroxyacyl]-N-acetyl-alpha-D-glucosamine + H2O = a UDP-3-O-[(3R)-3-hydroxyacyl]-alpha-D-glucosamine + acetate. It functions in the pathway glycolipid biosynthesis; lipid IV(A) biosynthesis; lipid IV(A) from (3R)-3-hydroxytetradecanoyl-[acyl-carrier-protein] and UDP-N-acetyl-alpha-D-glucosamine: step 2/6. In terms of biological role, catalyzes the hydrolysis of UDP-3-O-myristoyl-N-acetylglucosamine to form UDP-3-O-myristoylglucosamine and acetate, the committed step in lipid A biosynthesis. This Polaromonas sp. (strain JS666 / ATCC BAA-500) protein is UDP-3-O-acyl-N-acetylglucosamine deacetylase.